We begin with the raw amino-acid sequence, 360 residues long: Phospho-N-acetylmuramoyl-pentapeptide-transferase (360 aa).

The next 10 helical transmembrane spans lie at 21 to 41, 73 to 93, 98 to 118, 132 to 152, 168 to 188, 199 to 219, 236 to 256, 263 to 283, 288 to 308, and 338 to 358; these read YITF…LWIG, TMGG…WADL, VWFV…DDYW, WKYF…YAVG, FMPQ…VGTS, GLAI…AWAT, AGEL…FLWY, VFMG…IAVL, LLLV…ILQV, and VIVC…VTLK.

It belongs to the glycosyltransferase 4 family. MraY subfamily. The cofactor is Mg(2+).

The protein resides in the cell inner membrane. It carries out the reaction UDP-N-acetyl-alpha-D-muramoyl-L-alanyl-gamma-D-glutamyl-meso-2,6-diaminopimeloyl-D-alanyl-D-alanine + di-trans,octa-cis-undecaprenyl phosphate = di-trans,octa-cis-undecaprenyl diphospho-N-acetyl-alpha-D-muramoyl-L-alanyl-D-glutamyl-meso-2,6-diaminopimeloyl-D-alanyl-D-alanine + UMP. It participates in cell wall biogenesis; peptidoglycan biosynthesis. Functionally, catalyzes the initial step of the lipid cycle reactions in the biosynthesis of the cell wall peptidoglycan: transfers peptidoglycan precursor phospho-MurNAc-pentapeptide from UDP-MurNAc-pentapeptide onto the lipid carrier undecaprenyl phosphate, yielding undecaprenyl-pyrophosphoryl-MurNAc-pentapeptide, known as lipid I. This Actinobacillus pleuropneumoniae serotype 7 (strain AP76) protein is Phospho-N-acetylmuramoyl-pentapeptide-transferase.